The following is a 394-amino-acid chain: Dual-specificity RNA methyltransferase RlmN (394 aa).

Residue glutamate 115 is the Proton acceptor of the active site. A Radical SAM core domain is found at 121–363; the sequence is DEGRGTLCVS…SPIRTPRGED (243 aa). Cysteine 128 and cysteine 368 form a disulfide bridge. [4Fe-4S] cluster is bound by residues cysteine 135, cysteine 139, and cysteine 142. S-adenosyl-L-methionine-binding positions include 194–195, serine 226, 248–250, and asparagine 325; these read GE and SFH. Cysteine 368 (S-methylcysteine intermediate) is an active-site residue.

This sequence belongs to the radical SAM superfamily. RlmN family. [4Fe-4S] cluster is required as a cofactor.

Its subcellular location is the cytoplasm. It catalyses the reaction adenosine(2503) in 23S rRNA + 2 reduced [2Fe-2S]-[ferredoxin] + 2 S-adenosyl-L-methionine = 2-methyladenosine(2503) in 23S rRNA + 5'-deoxyadenosine + L-methionine + 2 oxidized [2Fe-2S]-[ferredoxin] + S-adenosyl-L-homocysteine. The enzyme catalyses adenosine(37) in tRNA + 2 reduced [2Fe-2S]-[ferredoxin] + 2 S-adenosyl-L-methionine = 2-methyladenosine(37) in tRNA + 5'-deoxyadenosine + L-methionine + 2 oxidized [2Fe-2S]-[ferredoxin] + S-adenosyl-L-homocysteine. Its function is as follows. Specifically methylates position 2 of adenine 2503 in 23S rRNA and position 2 of adenine 37 in tRNAs. m2A2503 modification seems to play a crucial role in the proofreading step occurring at the peptidyl transferase center and thus would serve to optimize ribosomal fidelity. The chain is Dual-specificity RNA methyltransferase RlmN from Roseobacter denitrificans (strain ATCC 33942 / OCh 114) (Erythrobacter sp. (strain OCh 114)).